The sequence spans 273 residues: Serine acetyltransferase (273 aa).

The protein belongs to the transferase hexapeptide repeat family. In terms of assembly, homohexamer. Dimer of a homotrimer.

The protein localises to the cytoplasm. The enzyme catalyses L-serine + acetyl-CoA = O-acetyl-L-serine + CoA. It functions in the pathway amino-acid biosynthesis; L-cysteine biosynthesis; L-cysteine from L-serine: step 1/2. This Shigella flexneri protein is Serine acetyltransferase (cysE).